The following is a 956-amino-acid chain: uncharacterized protein (956 aa).

Residues Pro-40 to Ala-141 form the Fibronectin type-III domain. Disordered stretches follow at residues Arg-152–Leu-173 and Asn-488–His-600. Composition is skewed to polar residues over residues Asn-153–Asn-165 and Asn-488–Gly-523. Residue Thr-154 is modified to Phosphothreonine. A phosphoserine mark is found at Ser-501 and Ser-520. Residues Ser-524–Ala-543 are compositionally biased toward low complexity. The span at Val-552–Pro-563 shows a compositional bias: polar residues. Low complexity predominate over residues Ser-564–Asp-574. Polar residues predominate over residues Arg-578–Ser-599. Residues Ser-802, Ser-842, and Ser-895 each carry the phosphoserine modification. A disordered region spans residues Val-875–Ser-956. The span at Ser-895–Ser-904 shows a compositional bias: low complexity.

This is an uncharacterized protein from Saccharomyces cerevisiae (strain ATCC 204508 / S288c) (Baker's yeast).